Consider the following 455-residue polypeptide: CDP-diacylglycerol--serine O-phosphatidyltransferase (455 aa).

PLD phosphodiesterase domains are found at residues 134–160 (VFGV…NNVY) and 356–383 (GDNT…NPRA).

The protein belongs to the CDP-alcohol phosphatidyltransferase class-II family. In terms of assembly, multimeric.

The protein localises to the cytoplasm. Its subcellular location is the cell inner membrane. The catalysed reaction is a CDP-1,2-diacyl-sn-glycerol + L-serine = a 1,2-diacyl-sn-glycero-3-phospho-L-serine + CMP + H(+). The protein is CDP-diacylglycerol--serine O-phosphatidyltransferase (pssA) of Haemophilus influenzae (strain ATCC 51907 / DSM 11121 / KW20 / Rd).